Consider the following 457-residue polypeptide: Glutamate--tRNA ligase 1 (457 aa).

The 'HIGH' region signature appears at 9 to 19 (PSPTGYIHIGN). The 'KMSKS' region motif lies at 250–254 (GLSKR). Lys-253 contributes to the ATP binding site.

Belongs to the class-I aminoacyl-tRNA synthetase family. Glutamate--tRNA ligase type 1 subfamily. Monomer.

Its subcellular location is the cytoplasm. The catalysed reaction is tRNA(Glu) + L-glutamate + ATP = L-glutamyl-tRNA(Glu) + AMP + diphosphate. In terms of biological role, catalyzes the attachment of glutamate to tRNA(Glu) in a two-step reaction: glutamate is first activated by ATP to form Glu-AMP and then transferred to the acceptor end of tRNA(Glu). This is Glutamate--tRNA ligase 1 from Brucella abortus (strain S19).